The primary structure comprises 329 residues: Ribosomal protein L11 methyltransferase (329 aa).

S-adenosyl-L-methionine-binding residues include threonine 177, glycine 198, aspartate 220, and asparagine 264.

This sequence belongs to the methyltransferase superfamily. PrmA family.

It is found in the cytoplasm. The catalysed reaction is L-lysyl-[protein] + 3 S-adenosyl-L-methionine = N(6),N(6),N(6)-trimethyl-L-lysyl-[protein] + 3 S-adenosyl-L-homocysteine + 3 H(+). In terms of biological role, methylates ribosomal protein L11. In Helicobacter pylori (strain HPAG1), this protein is Ribosomal protein L11 methyltransferase.